The chain runs to 214 residues: Peroxiredoxin-5, mitochondrial (214 aa).

The transit peptide at 1–52 directs the protein to the mitochondrion; it reads MGLAGVCALRRSAGYILVGGAGGQSAAAAARRYSEGEWASGGVRSFSRAAAA. The Thioredoxin domain occupies 56–214; sequence IKVGDAIPAV…SLAPNIISQL (159 aa). N6-acetyllysine is present on K75. The residue at position 83 (K83) is an N6-acetyllysine; alternate. K83 bears the N6-succinyllysine; alternate mark. The active-site Cysteine sulfenic acid (-SOH) intermediate is the C100. C100 carries the S-palmitoyl cysteine lipid modification. C100 and C204 form a disulfide bridge. K116 carries the post-translational modification N6-succinyllysine. Phosphoserine is present on residues S171 and S182. Residues 212–214 carry the Microbody targeting signal motif; the sequence is SQL.

Belongs to the peroxiredoxin family. Prx5 subfamily. In terms of assembly, monomer. Post-translationally, S-palmitoylated. Palmitoylation occurs on the active site, inhibiting its reactivity; therefore PRDX5 palmitoylation status determines its antioxidant capacity. In terms of processing, S-palmitoylated. Depalmitoylated by ABHD10. As to expression, widely expressed.

The protein resides in the mitochondrion. It is found in the cytoplasm. The protein localises to the peroxisome matrix. It carries out the reaction a hydroperoxide + [thioredoxin]-dithiol = an alcohol + [thioredoxin]-disulfide + H2O. In terms of biological role, thiol-specific peroxidase that catalyzes the reduction of hydrogen peroxide and organic hydroperoxides to water and alcohols, respectively. Plays a role in cell protection against oxidative stress by detoxifying peroxides and as sensor of hydrogen peroxide-mediated signaling events. The sequence is that of Peroxiredoxin-5, mitochondrial from Homo sapiens (Human).